The chain runs to 396 residues: Proteasome-activating nucleotidase (396 aa).

Positions 16–57 (VTYLKRRIRQLELQVRMLEADKERLERELSRLRSEMSRLRQP) form a coiled coil. ATP contacts are provided by residues 181–186 (GCGKTL) and histidine 320. The segment at 394–396 (IYG) is docks into pockets in the proteasome alpha-ring to cause gate opening.

This sequence belongs to the AAA ATPase family. As to quaternary structure, homohexamer. The hexameric complex has a two-ring architecture resembling a top hat that caps the 20S proteasome core at one or both ends. Upon ATP-binding, the C-terminus of PAN interacts with the alpha-rings of the proteasome core by binding to the intersubunit pockets.

Its subcellular location is the cytoplasm. ATPase which is responsible for recognizing, binding, unfolding and translocation of substrate proteins into the archaeal 20S proteasome core particle. Is essential for opening the gate of the 20S proteasome via an interaction with its C-terminus, thereby allowing substrate entry and access to the site of proteolysis. Thus, the C-termini of the proteasomal ATPase function like a 'key in a lock' to induce gate opening and therefore regulate proteolysis. Unfolding activity requires energy from ATP hydrolysis, whereas ATP binding alone promotes ATPase-20S proteasome association which triggers gate opening, and supports translocation of unfolded substrates. The polypeptide is Proteasome-activating nucleotidase (Pyrococcus furiosus (strain ATCC 43587 / DSM 3638 / JCM 8422 / Vc1)).